The sequence spans 212 residues: Large ribosomal subunit protein uL3 (212 aa).

A disordered region spans residues 135-161; sequence MTHGNSLSHRAPGSIGQNQSPGKVFKG. N5-methylglutamine is present on glutamine 153.

This sequence belongs to the universal ribosomal protein uL3 family. In terms of assembly, part of the 50S ribosomal subunit. Forms a cluster with proteins L14 and L19. Methylated by PrmB.

Functionally, one of the primary rRNA binding proteins, it binds directly near the 3'-end of the 23S rRNA, where it nucleates assembly of the 50S subunit. This Alteromonas mediterranea (strain DSM 17117 / CIP 110805 / LMG 28347 / Deep ecotype) protein is Large ribosomal subunit protein uL3.